A 1218-amino-acid chain; its full sequence is MIKNGTCPYWERDDLSECARREYIEFKFPLFILLTGMIYAFCKVFRAFYLRGKNHTNEAPEFEEQGNGNHEYARFSVLRLKSAWESRSFCNVNNRSTFDKFKKFIEGAFIVLQLTIHLYILSSMPMDNKKFFHQGFLVQMFLWILLLVVITLRLISASQSFRWVLACKRDLWAVSFYSYASLFTLSILPLRSVFIGKIKDKIMVKYIISETFIDLALLLLLSTSSIEGTRYSFLVENENKKLPPAPTVFGLLTFSRIDRLIWKAYKHCLGNADIWDLDINNKSIAILANFEMSSKKGRLLPNIICYFKAVFISQLFLAFVSSFLNFVPSLLMPRILSYVNDPKSKSWNLVSLYVSSMLVSKIIATTCRGQGLFLGEKGTMQLRTVLISNIYSKTLRRTILKDSTTSLQKNASTSFEENPDSSEAEPRKKSSRKDNSVNNVMSIDAFKVSEAMNTFYLACEAVFMTVTALMILYSLLGWSAFAGTFALLAMIPLNFWCATFYGNYQADQLILTDKRTSGISEALNSIRVIKLLAWENLFYQKIINVRDGEIRLLKKKATIFFLNHLIWFFGPTLVSAITFSVFIKFQNQTLTPTIAFTALSLFAILRTPMDQIASTVSLLIQSFISLERIQDYLNESETRKYEILEQSNTKFGFEDASMEWEAAETSFKLKNISIDFKLNSLNAIIGPTGSGKSSLLLGLLGELNLLSGKIYVPTVESRDDLEIGKDGMTNSMAYCSQTPWLISGTIKDNVVFGEIFNKQKFDDVMKSCCLDKDIKAMTAGIRTDVGDGGFSLSGGQQQRIALARAIYSSSRYLILDDCLSAVDPETALYIYEECLCGPMMKGRTCIITSHNISLVTKRADWLVILDRGEVKSQGKPSDLIKSNEFLRESINNDSKNTTHNQIDLKRSTTSKKTKNGDPEGGNSQDEVCAEVENFEETKMEGSVKFSAYKWLADYFGGLGVVFVFTSSSILIHGITLSQGFWLRYWLDTGSSGSKSTWLYRIVEGHSNIYFLLTYIIIGLVSSFLTSGKVWIAIISGTNVTKKIFAKLLSSILYAKLRFHNVTPTGRIMNRFSKDMDIIDQQLIPNFEGLSYSVVVCLWIILLIGYVTPQFLLFAIPLCALYYTVCTLYLRASRELKRIDNINISPIHQLFAEAIKGVTTIRALADERRFITQSLVAIDRSNAPFFYLNMATEWITYRVDIIGTLVLFSSSVMIIMKAS.

The Extracellular portion of the chain corresponds to 1–29 (MIKNGTCPYWERDDLSECARREYIEFKFP). Residue N4 is glycosylated (N-linked (GlcNAc...) asparagine). The helical transmembrane segment at 30 to 50 (LFILLTGMIYAFCKVFRAFYL) threads the bilayer. Topologically, residues 51 to 103 (RGKNHTNEAPEFEEQGNGNHEYARFSVLRLKSAWESRSFCNVNNRSTFDKFKK) are cytoplasmic. A helical transmembrane segment spans residues 104 to 124 (FIEGAFIVLQLTIHLYILSSM). Topologically, residues 125-130 (PMDNKK) are extracellular. Residues 131-151 (FFHQGFLVQMFLWILLLVVIT) traverse the membrane as a helical segment. Topologically, residues 152-169 (LRLISASQSFRWVLACKR) are cytoplasmic. Residues 170–190 (DLWAVSFYSYASLFTLSILPL) traverse the membrane as a helical segment. Residues 191–201 (RSVFIGKIKDK) are Extracellular-facing. Residues 202–222 (IMVKYIISETFIDLALLLLLS) form a helical membrane-spanning segment. The Cytoplasmic portion of the chain corresponds to 223–302 (TSSIEGTRYS…SSKKGRLLPN (80 aa)). A helical transmembrane segment spans residues 303–323 (IICYFKAVFISQLFLAFVSSF). The ABC transmembrane type-1 1 domain maps to 311-621 (FISQLFLAFV…IASTVSLLIQ (311 aa)). The Extracellular segment spans residues 324 to 351 (LNFVPSLLMPRILSYVNDPKSKSWNLVS). Residues 352 to 374 (LYVSSMLVSKIIATTCRGQGLFL) traverse the membrane as a helical segment. The Cytoplasmic segment spans residues 375-449 (GEKGTMQLRT…VMSIDAFKVS (75 aa)). The segment at 410–434 (NASTSFEENPDSSEAEPRKKSSRKD) is disordered. Positions 424–434 (AEPRKKSSRKD) are enriched in basic and acidic residues. A helical transmembrane segment spans residues 450–470 (EAMNTFYLACEAVFMTVTALM). Residues 471 to 481 (ILYSLLGWSAF) lie on the Extracellular side of the membrane. A helical transmembrane segment spans residues 482–504 (AGTFALLAMIPLNFWCATFYGNY). Topologically, residues 505 to 558 (QADQLILTDKRTSGISEALNSIRVIKLLAWENLFYQKIINVRDGEIRLLKKKAT) are cytoplasmic. The chain crosses the membrane as a helical span at residues 559–579 (IFFLNHLIWFFGPTLVSAITF). The Extracellular segment spans residues 580-584 (SVFIK). A helical membrane pass occupies residues 585–605 (FQNQTLTPTIAFTALSLFAIL). The Cytoplasmic segment spans residues 606–953 (RTPMDQIAST…KFSAYKWLAD (348 aa)). One can recognise an ABC transporter domain in the interval 651-892 (FGFEDASMEW…NEFLRESINN (242 aa)). 686-693 (GPTGSGKS) lines the ATP pocket. Polar residues predominate over residues 892 to 901 (NDSKNTTHNQ). The tract at residues 892–926 (NDSKNTTHNQIDLKRSTTSKKTKNGDPEGGNSQDE) is disordered. The chain crosses the membrane as a helical span at residues 954-974 (YFGGLGVVFVFTSSSILIHGI). The region spanning 961–1218 (VFVFTSSSIL…SSVMIIMKAS (258 aa)) is the ABC transmembrane type-1 2 domain. Topologically, residues 975–1013 (TLSQGFWLRYWLDTGSSGSKSTWLYRIVEGHSNIYFLLT) are extracellular. Residues 1014-1034 (YIIIGLVSSFLTSGKVWIAII) form a helical membrane-spanning segment. Topologically, residues 1035–1082 (SGTNVTKKIFAKLLSSILYAKLRFHNVTPTGRIMNRFSKDMDIIDQQL) are cytoplasmic. The chain crosses the membrane as a helical span at residues 1083–1105 (IPNFEGLSYSVVVCLWIILLIGY). At 1106-1109 (VTPQ) the chain is on the extracellular side. A helical transmembrane segment spans residues 1110-1132 (FLLFAIPLCALYYTVCTLYLRAS). The Cytoplasmic portion of the chain corresponds to 1133-1197 (RELKRIDNIN…NMATEWITYR (65 aa)). The chain crosses the membrane as a helical span at residues 1198–1218 (VDIIGTLVLFSSSVMIIMKAS).

The protein belongs to the ABC transporter superfamily. ABCC family. Conjugate transporter (TC 3.A.1.208) subfamily.

Its subcellular location is the membrane. This chain is ABC transporter NFT1 (NFT1), found in Saccharomyces cerevisiae (strain ATCC 204508 / S288c) (Baker's yeast).